The following is a 209-amino-acid chain: ATP synthase subunit b', chloroplastic (209 aa).

A chloroplast-targeting transit peptide spans 1–62 (MASLLARPQQ…NALMAMPAAA (62 aa)). A helical transmembrane segment spans residues 67–87 (IFDFNLTLPVMAGEFLLLMVF).

It belongs to the ATPase B chain family. As to quaternary structure, F-type ATPases have 2 components, F(1) - the catalytic core - and F(0) - the membrane proton channel. F(1) has five subunits: alpha(3), beta(3), gamma(1), delta(1), epsilon(1). F(0) has four main subunits: a(1), b(1), b'(1) and c(10-14). The alpha and beta chains form an alternating ring which encloses part of the gamma chain. F(1) is attached to F(0) by a central stalk formed by the gamma and epsilon chains, while a peripheral stalk is formed by the delta, b and b' chains.

It localises to the plastid. The protein localises to the chloroplast thylakoid membrane. F(1)F(0) ATP synthase produces ATP from ADP in the presence of a proton or sodium gradient. F-type ATPases consist of two structural domains, F(1) containing the extramembraneous catalytic core and F(0) containing the membrane proton channel, linked together by a central stalk and a peripheral stalk. During catalysis, ATP synthesis in the catalytic domain of F(1) is coupled via a rotary mechanism of the central stalk subunits to proton translocation. Functionally, component of the F(0) channel, it forms part of the peripheral stalk, linking F(1) to F(0). The b'-subunit is a diverged and duplicated form of b found in plants and photosynthetic bacteria. The polypeptide is ATP synthase subunit b', chloroplastic (Chlamydomonas reinhardtii (Chlamydomonas smithii)).